Consider the following 688-residue polypeptide: Elongation factor G (688 aa).

Residues 6–280 (KLFRNFGIMA…AVVDFLPSPI (275 aa)) form the tr-type G domain. GTP is bound by residues 15-22 (AHIDAGKT), 79-83 (DTPGH), and 133-136 (NKMD).

Belongs to the TRAFAC class translation factor GTPase superfamily. Classic translation factor GTPase family. EF-G/EF-2 subfamily.

The protein resides in the cytoplasm. Its function is as follows. Catalyzes the GTP-dependent ribosomal translocation step during translation elongation. During this step, the ribosome changes from the pre-translocational (PRE) to the post-translocational (POST) state as the newly formed A-site-bound peptidyl-tRNA and P-site-bound deacylated tRNA move to the P and E sites, respectively. Catalyzes the coordinated movement of the two tRNA molecules, the mRNA and conformational changes in the ribosome. This chain is Elongation factor G, found in Ureaplasma parvum serovar 3 (strain ATCC 27815 / 27 / NCTC 11736).